We begin with the raw amino-acid sequence, 38 residues long: Cytochrome b6-f complex subunit 5 (38 aa).

Residues 5–25 (LLCGIVLGLIPVTLLGLFVDA) form a helical membrane-spanning segment.

It belongs to the PetG family. As to quaternary structure, the 4 large subunits of the cytochrome b6-f complex are cytochrome b6, subunit IV (17 kDa polypeptide, PetD), cytochrome f and the Rieske protein, while the 4 small subunits are PetG, PetL, PetM and PetN. The complex functions as a dimer.

It localises to the cellular thylakoid membrane. Its function is as follows. Component of the cytochrome b6-f complex, which mediates electron transfer between photosystem II (PSII) and photosystem I (PSI), cyclic electron flow around PSI, and state transitions. PetG is required for either the stability or assembly of the cytochrome b6-f complex. In Prochlorococcus marinus (strain MIT 9313), this protein is Cytochrome b6-f complex subunit 5.